The following is a 212-amino-acid chain: Deoxyribose-phosphate aldolase (212 aa).

Asp89 serves as the catalytic Proton donor/acceptor. The active-site Schiff-base intermediate with acetaldehyde is Lys151. The active-site Proton donor/acceptor is Lys180.

Belongs to the DeoC/FbaB aldolase family. DeoC type 1 subfamily.

It is found in the cytoplasm. It catalyses the reaction 2-deoxy-D-ribose 5-phosphate = D-glyceraldehyde 3-phosphate + acetaldehyde. It functions in the pathway carbohydrate degradation; 2-deoxy-D-ribose 1-phosphate degradation; D-glyceraldehyde 3-phosphate and acetaldehyde from 2-deoxy-alpha-D-ribose 1-phosphate: step 2/2. Its function is as follows. Catalyzes a reversible aldol reaction between acetaldehyde and D-glyceraldehyde 3-phosphate to generate 2-deoxy-D-ribose 5-phosphate. The sequence is that of Deoxyribose-phosphate aldolase from Clostridium botulinum (strain Langeland / NCTC 10281 / Type F).